The following is a 140-amino-acid chain: Putative pre-16S rRNA nuclease (140 aa).

Belongs to the YqgF nuclease family.

Its subcellular location is the cytoplasm. Functionally, could be a nuclease involved in processing of the 5'-end of pre-16S rRNA. The sequence is that of Putative pre-16S rRNA nuclease from Aeromonas hydrophila subsp. hydrophila (strain ATCC 7966 / DSM 30187 / BCRC 13018 / CCUG 14551 / JCM 1027 / KCTC 2358 / NCIMB 9240 / NCTC 8049).